A 270-amino-acid chain; its full sequence is Phosphatidylglycerol--prolipoprotein diacylglyceryl transferase (270 aa).

4 consecutive transmembrane segments (helical) span residues 19–39, 53–73, 92–112, and 117–137; these read FPVY…LWLA, FVDL…AYYV, QGGL…IIYA, and ISFW…QAIG. Residue R138 coordinates a 1,2-diacyl-sn-glycero-3-phospho-(1'-sn-glycerol). Transmembrane regions (helical) follow at residues 178-198, 206-226, and 236-256; these read HPTF…LLLL, GELF…VEEL, and LRIA…FIIV.

This sequence belongs to the Lgt family.

Its subcellular location is the cell membrane. The enzyme catalyses L-cysteinyl-[prolipoprotein] + a 1,2-diacyl-sn-glycero-3-phospho-(1'-sn-glycerol) = an S-1,2-diacyl-sn-glyceryl-L-cysteinyl-[prolipoprotein] + sn-glycerol 1-phosphate + H(+). It participates in protein modification; lipoprotein biosynthesis (diacylglyceryl transfer). Its function is as follows. Catalyzes the transfer of the diacylglyceryl group from phosphatidylglycerol to the sulfhydryl group of the N-terminal cysteine of a prolipoprotein, the first step in the formation of mature lipoproteins. This chain is Phosphatidylglycerol--prolipoprotein diacylglyceryl transferase, found in Bacillus cytotoxicus (strain DSM 22905 / CIP 110041 / 391-98 / NVH 391-98).